We begin with the raw amino-acid sequence, 310 residues long: Tagatose-6-phosphate kinase (310 aa).

Belongs to the carbohydrate kinase PfkB family. LacC subfamily.

It catalyses the reaction D-tagatofuranose 6-phosphate + ATP = D-tagatofuranose 1,6-bisphosphate + ADP + H(+). It participates in carbohydrate metabolism; D-tagatose 6-phosphate degradation; D-glyceraldehyde 3-phosphate and glycerone phosphate from D-tagatose 6-phosphate: step 1/2. This Lactococcus lactis subsp. lactis (Streptococcus lactis) protein is Tagatose-6-phosphate kinase.